The following is a 426-amino-acid chain: Mannose-6-phosphate isomerase (426 aa).

Positions 112, 114, 139, and 277 each coordinate Zn(2+). R296 is a catalytic residue.

It belongs to the mannose-6-phosphate isomerase type 1 family. Zn(2+) is required as a cofactor.

The protein localises to the cytoplasm. The catalysed reaction is D-mannose 6-phosphate = D-fructose 6-phosphate. The protein operates within nucleotide-sugar biosynthesis; GDP-alpha-D-mannose biosynthesis; alpha-D-mannose 1-phosphate from D-fructose 6-phosphate: step 1/2. Its function is as follows. Involved in the synthesis of the GDP-mannose and dolichol-phosphate-mannose required for a number of critical mannosyl transfer reactions. The chain is Mannose-6-phosphate isomerase (PMI40) from Ogataea parapolymorpha (strain ATCC 26012 / BCRC 20466 / JCM 22074 / NRRL Y-7560 / DL-1) (Yeast).